We begin with the raw amino-acid sequence, 78 residues long: Acyl carrier protein (78 aa).

One can recognise a Carrier domain in the interval 2–77 (QNIEKKIKKI…SIFDIIKKYV (76 aa)). The residue at position 37 (S37) is an O-(pantetheine 4'-phosphoryl)serine.

It belongs to the acyl carrier protein (ACP) family. In terms of processing, 4'-phosphopantetheine is transferred from CoA to a specific serine of apo-ACP by AcpS. This modification is essential for activity because fatty acids are bound in thioester linkage to the sulfhydryl of the prosthetic group.

The protein localises to the cytoplasm. Its pathway is lipid metabolism; fatty acid biosynthesis. Functionally, carrier of the growing fatty acid chain in fatty acid biosynthesis. This chain is Acyl carrier protein, found in Buchnera aphidicola subsp. Baizongia pistaciae (strain Bp).